Consider the following 492-residue polypeptide: N-succinylglutamate 5-semialdehyde dehydrogenase (492 aa).

220–225 contacts NAD(+); it reads GSANTG. Catalysis depends on residues E243 and C277.

The protein belongs to the aldehyde dehydrogenase family. AstD subfamily.

It catalyses the reaction N-succinyl-L-glutamate 5-semialdehyde + NAD(+) + H2O = N-succinyl-L-glutamate + NADH + 2 H(+). It participates in amino-acid degradation; L-arginine degradation via AST pathway; L-glutamate and succinate from L-arginine: step 4/5. Its function is as follows. Catalyzes the NAD-dependent reduction of succinylglutamate semialdehyde into succinylglutamate. The sequence is that of N-succinylglutamate 5-semialdehyde dehydrogenase from Shigella flexneri serotype 5b (strain 8401).